A 505-amino-acid polypeptide reads, in one-letter code: Protein nucleotidyltransferase YdiU (505 aa).

Residues Gly-102, Gly-104, Arg-105, Lys-125, Asp-137, Gly-138, Arg-188, and Arg-195 each coordinate ATP. Asp-264 serves as the catalytic Proton acceptor. The Mg(2+) site is built by Asn-265 and Asp-274. Asp-274 contributes to the ATP binding site.

The protein belongs to the SELO family. Mg(2+) serves as cofactor. Requires Mn(2+) as cofactor.

The enzyme catalyses L-seryl-[protein] + ATP = 3-O-(5'-adenylyl)-L-seryl-[protein] + diphosphate. The catalysed reaction is L-threonyl-[protein] + ATP = 3-O-(5'-adenylyl)-L-threonyl-[protein] + diphosphate. It catalyses the reaction L-tyrosyl-[protein] + ATP = O-(5'-adenylyl)-L-tyrosyl-[protein] + diphosphate. It carries out the reaction L-histidyl-[protein] + UTP = N(tele)-(5'-uridylyl)-L-histidyl-[protein] + diphosphate. The enzyme catalyses L-seryl-[protein] + UTP = O-(5'-uridylyl)-L-seryl-[protein] + diphosphate. The catalysed reaction is L-tyrosyl-[protein] + UTP = O-(5'-uridylyl)-L-tyrosyl-[protein] + diphosphate. Functionally, nucleotidyltransferase involved in the post-translational modification of proteins. It can catalyze the addition of adenosine monophosphate (AMP) or uridine monophosphate (UMP) to a protein, resulting in modifications known as AMPylation and UMPylation. This is Protein nucleotidyltransferase YdiU from Nitrobacter winogradskyi (strain ATCC 25391 / DSM 10237 / CIP 104748 / NCIMB 11846 / Nb-255).